The primary structure comprises 152 residues: Superoxide dismutase [Cu-Zn] (152 aa).

Cu cation is bound by residues H45, H47, and H62. The tract at residues 61 to 87 (PHFNPAGKEHGAPEDENRHAGDLGNAT) is disordered. Zn(2+)-binding residues include H62, H70, H79, and D82. Residues 67–81 (GKEHGAPEDENRHAG) show a composition bias toward basic and acidic residues. Position 119 (H119) interacts with Cu cation.

It belongs to the Cu-Zn superoxide dismutase family. Homodimer. Cu cation is required as a cofactor. Requires Zn(2+) as cofactor.

Its subcellular location is the cytoplasm. It catalyses the reaction 2 superoxide + 2 H(+) = H2O2 + O2. Its function is as follows. Destroys radicals which are normally produced within the cells and which are toxic to biological systems. The sequence is that of Superoxide dismutase [Cu-Zn] from Zingiber officinale (Ginger).